The following is a 405-amino-acid chain: Intraflagellar transport protein 57 homolog (405 aa).

Positions 252–380 (ETLKTNILEN…AQLNLEVALL (129 aa)) form a coiled coil.

The protein belongs to the IFT57 family.

Its subcellular location is the cytoplasm. The protein localises to the cytoskeleton. It is found in the cilium basal body. In terms of biological role, required for the formation of cilia. The protein is Intraflagellar transport protein 57 homolog of Drosophila melanogaster (Fruit fly).